A 294-amino-acid polypeptide reads, in one-letter code: Flagellin B1 (294 aa).

Residues 1–8 (MKTRTRKG) constitute a propeptide that is removed on maturation.

It belongs to the archaeal flagellin family.

It localises to the archaeal flagellum. Its function is as follows. Flagellin is the subunit protein which polymerizes to form the filaments of archaeal flagella. This is Flagellin B1 (flaB1) from Thermococcus kodakarensis (strain ATCC BAA-918 / JCM 12380 / KOD1) (Pyrococcus kodakaraensis (strain KOD1)).